The chain runs to 147 residues: Large ribosomal subunit protein uL11 (147 aa).

The protein belongs to the universal ribosomal protein uL11 family. In terms of assembly, part of the ribosomal stalk of the 50S ribosomal subunit. Interacts with L10 and the large rRNA to form the base of the stalk. L10 forms an elongated spine to which L12 dimers bind in a sequential fashion forming a multimeric L10(L12)X complex. Post-translationally, one or more lysine residues are methylated.

In terms of biological role, forms part of the ribosomal stalk which helps the ribosome interact with GTP-bound translation factors. The polypeptide is Large ribosomal subunit protein uL11 (Metamycoplasma arthritidis (strain 158L3-1) (Mycoplasma arthritidis)).